Here is a 486-residue protein sequence, read N- to C-terminus: uncharacterized protein (486 aa).

2 consecutive ABC transporter domains span residues 2–241 (VEFK…KVFV) and 249–486 (FEKD…LLFL). 36–43 (GKNGEGKS) is a binding site for ATP.

It belongs to the ABC transporter superfamily.

This is an uncharacterized protein from Borreliella burgdorferi (strain ATCC 35210 / DSM 4680 / CIP 102532 / B31) (Borrelia burgdorferi).